Here is a 407-residue protein sequence, read N- to C-terminus: Aurora kinase A-A (407 aa).

The segment covering 1 to 10 (MERAVKENHK) has biased composition (basic and acidic residues). The disordered stretch occupies residues 1–130 (MERAVKENHK…KTSAVPKEEG (130 aa)). 2 stretches are compositionally biased toward polar residues: residues 67–77 (ILSSQKPTTQI) and 84–110 (QGHQ…STPN). Residues 140-390 (FEIGRPLGKG…LKGVLEHPWI (251 aa)) form the Protein kinase domain. ATP-binding positions include lysine 150, lysine 169, and 217-220 (LDYA). Residue aspartate 263 is the Proton acceptor of the active site. Aspartate 281 serves as a coordination point for ATP. The segment at 287–300 (HAPSSRRTTLCGTL) is activation segment.

It belongs to the protein kinase superfamily. Ser/Thr protein kinase family. Aurora subfamily. In terms of assembly, interacts with kif2c and kif11. In terms of processing, phosphorylated. Autophosphorylated on a serine residue. As to expression, highly expressed in ovary and testis.

The protein resides in the cytoplasm. It is found in the cytoskeleton. Its subcellular location is the spindle. It localises to the microtubule organizing center. The protein localises to the centrosome. The enzyme catalyses L-seryl-[protein] + ATP = O-phospho-L-seryl-[protein] + ADP + H(+). It catalyses the reaction L-threonyl-[protein] + ATP = O-phospho-L-threonyl-[protein] + ADP + H(+). Mitotic serine/threonine kinases that contributes to the regulation of cell cycle progression. Associates with the centrosome and the spindle microtubules during mitosis and plays a critical role in various mitotic events including the establishment of mitotic spindle, centrosome duplication, centrosome separation as well as maturation, chromosomal alignment, spindle assembly checkpoint, and cytokinesis. Phosphorylates numerous target proteins. Important for microtubule formation and/or stabilization. The protein is Aurora kinase A-A (aurka-a) of Xenopus laevis (African clawed frog).